The sequence spans 1577 residues: Probable serine/threonine-protein kinase gdt9 (1577 aa).

The first 16 residues, 1 to 16 (MKTFLLIFLLICVCKG), serve as a signal peptide directing secretion. Over 17 to 966 (ITNITTPSIY…NNEDNHKKLV (950 aa)) the chain is Extracellular. The helical transmembrane segment at 967 to 987 (IALSVSIPVAALLVILCFGIF) threads the bilayer. Over 988 to 1577 (ICYNNNKKNK…SLVKIFKRFN (590 aa)) the chain is Cytoplasmic. A compositionally biased stretch (basic and acidic residues) spans 998 to 1014 (NETKGKDIETNTDKKDD). Disordered stretches follow at residues 998–1019 (NETK…NENE) and 1050–1128 (TLPP…FPTI). A compositionally biased stretch (polar residues) spans 1050 to 1082 (TLPPQSTISIDTSPSSENTTFTESLTPKKSATV). A compositionally biased stretch (low complexity) spans 1091–1115 (NSTNESTVSNSSSENNSDNNNNNNN). A Protein kinase domain is found at 1290 to 1573 (LDFDEICGQG…EIVFSLVKIF (284 aa)). Residues 1296-1304 (CGQGTYGMV) and K1317 contribute to the ATP site. The active-site Proton acceptor is D1436.

It in the N-terminal section; belongs to the GDT family. The protein in the C-terminal section; belongs to the protein kinase superfamily. TKL Ser/Thr protein kinase family.

It localises to the membrane. The enzyme catalyses L-seryl-[protein] + ATP = O-phospho-L-seryl-[protein] + ADP + H(+). It carries out the reaction L-threonyl-[protein] + ATP = O-phospho-L-threonyl-[protein] + ADP + H(+). The chain is Probable serine/threonine-protein kinase gdt9 (gdt9) from Dictyostelium discoideum (Social amoeba).